Consider the following 417-residue polypeptide: Histidine--tRNA ligase (417 aa).

It belongs to the class-II aminoacyl-tRNA synthetase family. Homodimer.

It localises to the cytoplasm. The enzyme catalyses tRNA(His) + L-histidine + ATP = L-histidyl-tRNA(His) + AMP + diphosphate + H(+). In Caldanaerobacter subterraneus subsp. tengcongensis (strain DSM 15242 / JCM 11007 / NBRC 100824 / MB4) (Thermoanaerobacter tengcongensis), this protein is Histidine--tRNA ligase.